Here is a 1249-residue protein sequence, read N- to C-terminus: Pleckstrin homology-like domain family B member 2 (1249 aa).

Disordered stretches follow at residues 64 to 85 and 128 to 154; these read QPVS…SPSL and DHYT…SSRN. Phosphoserine is present on residues serine 71 and serine 73. Residues 74-84 show a composition bias toward polar residues; it reads PMGTSVRSSPS. Positions 128–143 are enriched in basic and acidic residues; sequence DHYTGRDSERSTRLSE. Residues serine 156, serine 203, serine 241, and serine 244 each carry the phosphoserine modification. 2 disordered regions span residues 190 to 248 and 264 to 289; these read SPIS…LSNM and NQMS…GEKD. A compositionally biased stretch (polar residues) spans 231-248; that stretch reads ENVSVRTRKYSGSSLSNM. Over residues 267–283 the composition is skewed to low complexity; sequence SPLSLPPRSSLGNSRRG. A phosphoserine mark is found at serine 329, serine 333, serine 347, serine 380, serine 383, serine 389, serine 411, serine 416, serine 465, serine 486, and serine 510. The segment at 388–424 is disordered; it reads DSDLESLRQSSETPQPVLRERKSSISSISGRDDLMDY. A phosphothreonine mark is found at threonine 546 and threonine 570. Coiled-coil stretches lie at residues 580–692 and 718–803; these read TQEL…LDNC and FEDL…LCNL. The tract at residues 866-934 is disordered; that stretch reads VSQPQSSEHF…LGQSNSCGSV (69 aa). The span at 873–888 shows a compositional bias: basic and acidic residues; the sequence is EHFRSLEERKKQHKEG. Threonine 894 bears the Phosphothreonine mark. Residues 901 to 919 are compositionally biased toward polar residues; sequence TPSLSPHFSSATMGRSTTP. Positions 1028-1094 form a coiled coil; that stretch reads IARIEEMERL…QKLIEKEVKI (67 aa). The PH domain maps to 1139–1242; it reads EKTCRGYLIK…WMDVIVTGAE (104 aa).

As to quaternary structure, interacts with FLNC. Interacts with AMOTL2; interaction may facilitate PHLDB2 localization to the myotube podosome cortex that surrounds the core. Part of a cortical microtubule stabilization complex (CMSC) composed of KANK1, PPFIA1, PPFIBP1, ERC1/ELKS, PHLDB2/LL5beta, CLASPs, KIF21A and possibly additional interactors; within CMSCs KANK1 and PHLDB2/LL5beta appear to be the core components for targeting of microtubule-binding proteins KIF21A and CLASPs, whereas PPFIA1, PPFIBP1 and ERC1/ELKS serve as scaffolds for protein clustering. In terms of tissue distribution, expressed at postsynaptic membranes of skeletal neuromuscular junctions (at protein level).

It localises to the cytoplasm. The protein resides in the membrane. Its subcellular location is the cell projection. The protein localises to the podosome. It is found in the cell cortex. Seems to be involved in the assembly of the postsynaptic apparatus. May play a role in acetyl-choline receptor (AChR) aggregation in the postsynaptic membrane. This Mus musculus (Mouse) protein is Pleckstrin homology-like domain family B member 2 (Phldb2).